Here is a 376-residue protein sequence, read N- to C-terminus: Glucose-1-phosphate adenylyltransferase (376 aa).

Alpha-D-glucose 1-phosphate is bound by residues tyrosine 101, glycine 166, 181–182, and serine 192; that span reads EK.

This sequence belongs to the bacterial/plant glucose-1-phosphate adenylyltransferase family. Homotetramer.

It carries out the reaction alpha-D-glucose 1-phosphate + ATP + H(+) = ADP-alpha-D-glucose + diphosphate. It functions in the pathway glycan biosynthesis; glycogen biosynthesis. Functionally, involved in the biosynthesis of ADP-glucose, a building block required for the elongation reactions to produce glycogen. Catalyzes the reaction between ATP and alpha-D-glucose 1-phosphate (G1P) to produce pyrophosphate and ADP-Glc. In Bacillus cereus (strain ATCC 14579 / DSM 31 / CCUG 7414 / JCM 2152 / NBRC 15305 / NCIMB 9373 / NCTC 2599 / NRRL B-3711), this protein is Glucose-1-phosphate adenylyltransferase.